Here is a 276-residue protein sequence, read N- to C-terminus: uncharacterized protein (276 aa).

The first 25 residues, 1-25 (MNKKRLLPKASLGALFMLFGTALTA), serve as a signal peptide directing secretion. Cysteine 26 is lipidated: N-palmitoyl cysteine. The S-diacylglycerol cysteine moiety is linked to residue cysteine 26.

Belongs to the MG439/MG440 family.

The protein resides in the cell membrane. This is an uncharacterized protein from Mycoplasma pneumoniae (strain ATCC 29342 / M129 / Subtype 1) (Mycoplasmoides pneumoniae).